Consider the following 376-residue polypeptide: 4-hydroxy-3-methylbut-2-enyl diphosphate reductase (376 aa).

Cysteine 19 lines the [4Fe-4S] cluster pocket. Histidine 48 and histidine 99 together coordinate (2E)-4-hydroxy-3-methylbut-2-enyl diphosphate. 2 residues coordinate dimethylallyl diphosphate: histidine 48 and histidine 99. Histidine 48 and histidine 99 together coordinate isopentenyl diphosphate. Position 121 (cysteine 121) interacts with [4Fe-4S] cluster. Histidine 149 is a (2E)-4-hydroxy-3-methylbut-2-enyl diphosphate binding site. Histidine 149 lines the dimethylallyl diphosphate pocket. An isopentenyl diphosphate-binding site is contributed by histidine 149. Glutamate 151 serves as the catalytic Proton donor. A (2E)-4-hydroxy-3-methylbut-2-enyl diphosphate-binding site is contributed by threonine 208. A [4Fe-4S] cluster-binding site is contributed by cysteine 236. Residues serine 264, asparagine 266, and serine 307 each contribute to the (2E)-4-hydroxy-3-methylbut-2-enyl diphosphate site. Residues serine 264, asparagine 266, and serine 307 each coordinate dimethylallyl diphosphate. 3 residues coordinate isopentenyl diphosphate: serine 264, asparagine 266, and serine 307.

This sequence belongs to the IspH family. It depends on [4Fe-4S] cluster as a cofactor.

The catalysed reaction is isopentenyl diphosphate + 2 oxidized [2Fe-2S]-[ferredoxin] + H2O = (2E)-4-hydroxy-3-methylbut-2-enyl diphosphate + 2 reduced [2Fe-2S]-[ferredoxin] + 2 H(+). It carries out the reaction dimethylallyl diphosphate + 2 oxidized [2Fe-2S]-[ferredoxin] + H2O = (2E)-4-hydroxy-3-methylbut-2-enyl diphosphate + 2 reduced [2Fe-2S]-[ferredoxin] + 2 H(+). Its pathway is isoprenoid biosynthesis; dimethylallyl diphosphate biosynthesis; dimethylallyl diphosphate from (2E)-4-hydroxy-3-methylbutenyl diphosphate: step 1/1. It participates in isoprenoid biosynthesis; isopentenyl diphosphate biosynthesis via DXP pathway; isopentenyl diphosphate from 1-deoxy-D-xylulose 5-phosphate: step 6/6. Its function is as follows. Catalyzes the conversion of 1-hydroxy-2-methyl-2-(E)-butenyl 4-diphosphate (HMBPP) into a mixture of isopentenyl diphosphate (IPP) and dimethylallyl diphosphate (DMAPP). Acts in the terminal step of the DOXP/MEP pathway for isoprenoid precursor biosynthesis. The polypeptide is 4-hydroxy-3-methylbut-2-enyl diphosphate reductase (Treponema pallidum (strain Nichols)).